The following is a 244-amino-acid chain: tRNA pseudouridine synthase A (244 aa).

D52 (nucleophile) is an active-site residue. Substrate is bound at residue Y110.

This sequence belongs to the tRNA pseudouridine synthase TruA family. As to quaternary structure, homodimer.

It carries out the reaction uridine(38/39/40) in tRNA = pseudouridine(38/39/40) in tRNA. Formation of pseudouridine at positions 38, 39 and 40 in the anticodon stem and loop of transfer RNAs. In Caldicellulosiruptor saccharolyticus (strain ATCC 43494 / DSM 8903 / Tp8T 6331), this protein is tRNA pseudouridine synthase A.